The chain runs to 302 residues: MDQQRFTHLLQLEAESIHIIREVAAEFSNPVMMYSIGKDSSVMLHLARKAFHPGKLPFPLLHVDTGWKFREMYAFRDHTAKAYGFELLVHKNPEGVAMGINPFVHGSAKHTDIMKNEGLKQALNQYGFDAAFGGARRDEEKSRAKERIYSFRDRFHRWDPKNQRPELWHNYNGQINKGESIRVFPLSNWTELDIWQYIFLENIEIVPLYLAKKRPVLERDGMLIMVDDDRIDLQPGEVIEQRMVRFRTLGCWPLTGAVASDAQTLPEIIEEMLVSTTSERQGRVIDRDQSGSMEMKKRQGYF.

Belongs to the PAPS reductase family. CysD subfamily. Heterodimer composed of CysD, the smaller subunit, and CysN.

It catalyses the reaction sulfate + ATP + H(+) = adenosine 5'-phosphosulfate + diphosphate. Its pathway is sulfur metabolism; hydrogen sulfide biosynthesis; sulfite from sulfate: step 1/3. In terms of biological role, with CysN forms the ATP sulfurylase (ATPS) that catalyzes the adenylation of sulfate producing adenosine 5'-phosphosulfate (APS) and diphosphate, the first enzymatic step in sulfur assimilation pathway. APS synthesis involves the formation of a high-energy phosphoric-sulfuric acid anhydride bond driven by GTP hydrolysis by CysN coupled to ATP hydrolysis by CysD. The sequence is that of Sulfate adenylyltransferase subunit 2 from Sodalis glossinidius (strain morsitans).